Reading from the N-terminus, the 76-residue chain is Beta-defensin 121 (76 aa).

Residues Met-1–Ala-15 form the signal peptide. Cystine bridges form between Cys-23–Cys-50, Cys-30–Cys-44, and Cys-34–Cys-51.

Belongs to the beta-defensin family.

Its subcellular location is the secreted. In terms of biological role, has antibacterial activity. The protein is Beta-defensin 121 (DEFB121) of Pan troglodytes (Chimpanzee).